Here is a 92-residue protein sequence, read N- to C-terminus: Small ribosomal subunit protein uS19 (92 aa).

The protein belongs to the universal ribosomal protein uS19 family.

Protein S19 forms a complex with S13 that binds strongly to the 16S ribosomal RNA. This Enterococcus faecalis (strain ATCC 700802 / V583) protein is Small ribosomal subunit protein uS19.